Consider the following 658-residue polypeptide: MSDVRVIIQRDSEREERVVTTGTTAAELFAGERSIIAARVSGDLKDLAYEVKDGETVEAVEISSEDGLDILRHSTAHVMAQAVQELFPEAKLGIGPPVKDGFYYDFDVEKPFHPDDLKAIEKKMQEIQKRGQRFSRRVVTDEAAREELADEPYKLELIGLKGSASSDDGADVEVGAGELTIYDNLDAKTGELCWKDLCRGPHLPTTRNIPAFKLMRNAAAYWRGSEKNPMLQRIYGTAWPTKDELKAHLEFLAEAEKRDHRKLGSELDLFSIPEQIGSGLAVFHPKGGIIRRVMEDYSRRRHEEEGYEFVYTPHATKGKLFETSGHLDWYADGMYPPMQLDEGVDYYLKPMNCPMHNLIFDARGRSYRELPLRLFEFGTVYRYEKSGVVHGLTRARGFTQDDAHIYCTREQMSEELDKTLTFVLNLLRDYGLNDFYLELSTKDPEKFVGSDEAWEEATETLRQVAEKQNLELVADPGGAAFYGPKISVQARDAIGRTWQMSTIQLDFNLPERFSLEYTAADGAKTRPVMIHRALFGSIERFFAVLLEHYAGAMPPWLAPVQAVGIPVGDAHVQYLEEFAAEARRKGLRVDVDASSDRMQKKIRTQQKQKVPFMIIVGDEDMHGGTVSFRYRDGSQENGIPRDQALAKLVDVVERRIQV.

The region spanning 1–61 is the TGS domain; the sequence is MSDVRVIIQR…KDGETVEAVE (61 aa). Residues 259 to 554 are catalytic; sequence DHRKLGSELD…LLEHYAGAMP (296 aa). Positions 353, 404, and 531 each coordinate Zn(2+).

Belongs to the class-II aminoacyl-tRNA synthetase family. Homodimer. Requires Zn(2+) as cofactor.

The protein resides in the cytoplasm. The catalysed reaction is tRNA(Thr) + L-threonine + ATP = L-threonyl-tRNA(Thr) + AMP + diphosphate + H(+). Catalyzes the attachment of threonine to tRNA(Thr) in a two-step reaction: L-threonine is first activated by ATP to form Thr-AMP and then transferred to the acceptor end of tRNA(Thr). Also edits incorrectly charged L-seryl-tRNA(Thr). The sequence is that of Threonine--tRNA ligase from Streptomyces coelicolor (strain ATCC BAA-471 / A3(2) / M145).